The chain runs to 267 residues: 4-hydroxy-tetrahydrodipicolinate reductase (267 aa).

NAD(+)-binding positions include 9–14 and D35; that span reads GAAGRM. Residue R36 coordinates NADP(+). Residues 99–101 and 123–126 contribute to the NAD(+) site; these read GTT and APNY. H156 (proton donor/acceptor) is an active-site residue. A (S)-2,3,4,5-tetrahydrodipicolinate-binding site is contributed by H157. K160 (proton donor) is an active-site residue. 166-167 is a (S)-2,3,4,5-tetrahydrodipicolinate binding site; that stretch reads GT.

This sequence belongs to the DapB family.

The protein resides in the cytoplasm. The catalysed reaction is (S)-2,3,4,5-tetrahydrodipicolinate + NAD(+) + H2O = (2S,4S)-4-hydroxy-2,3,4,5-tetrahydrodipicolinate + NADH + H(+). It catalyses the reaction (S)-2,3,4,5-tetrahydrodipicolinate + NADP(+) + H2O = (2S,4S)-4-hydroxy-2,3,4,5-tetrahydrodipicolinate + NADPH + H(+). It functions in the pathway amino-acid biosynthesis; L-lysine biosynthesis via DAP pathway; (S)-tetrahydrodipicolinate from L-aspartate: step 4/4. In terms of biological role, catalyzes the conversion of 4-hydroxy-tetrahydrodipicolinate (HTPA) to tetrahydrodipicolinate. This is 4-hydroxy-tetrahydrodipicolinate reductase from Alkalilimnicola ehrlichii (strain ATCC BAA-1101 / DSM 17681 / MLHE-1).